The primary structure comprises 1585 residues: MAKLTATFELHDKISRKLRMIQGNAERLKRAANGPLIFEAEDRTERVMRQIDRSANRLTARARLLEMGLDDRVSNGLHSIRQQAEDLTEGSHEVTVSVNDQATPRFRLIRGGLTDLNSSHAEPTVSVRDHASNQLDEIRRHVTDVDSEHAEPTVSIKDRASAALDAIEAKIDSLKGATITLAVAGGFSAGSIMGSGKSTMSQDAYVSATSNVNKKDVAKMTDQIYFNNKAGSSREEVSLSLRNLSQQTGASKKALAELTESSSKIAQLMNADQAEVDRAFSSMYNNLKLSGKQSGDLIAYVYRNAGDQADDLLDTMNEYSSTFKDLKLTGGQIANAMIKGTKGGARNFDNLADSMREFNIRRTEMSDSQVDAFKTLFGAKETKKMFKGFKDGSISGEESLFRVAKALSKVKDKTKRAAIATELIGTQYEDLKQPILDMAEGIGTSAKTSGELERSFTKLRDNNPMTPVNDAMRDFESISKDMGTSLLTGLGPAFDKISSFINSKEGQEKLKEIKKDIADLGEEIGDKLNVAIEWSVNHWDDLKTAIKVVIPSLIGLIGYLKILRPLLKGIGTVGSDAAGVIRKLIPKRTPKAGTNTQSERRNRNSNRNASTRGRESKTATGPTSLPRSGSLTYCCCSDGGKNDRIRRRRGKRVLGRRGNPNRMNPSDSSIAVSSERLERRRSGRTVGTNPTRDSRSAIITTRSELYSAGRAAGGTSKFGKVLSPLKSVGKFAKGVPLLGTALAATDLIGMNKDNVGEKIGSAGGGLAGAATGAAIGSVIPGVGTAIGGLVGGIAGTMGGSSLGKAFDGSEVKKKLNSTLFDQKWWSEKWSGIKSNAKTSINGLSDTWSNVKEKVKSTLFNSEWWSEKWSGVKSWAQNKWNSASSVWESVKGKIKSTLFSEKWWSGKWEGVKSWAQSKWDSASSVWQSVKGKLKSTLFSEKWWSGKWESVKSWSKNKWDNAKSIWKSVKSSISETLFSKKWWSEKWQSVKELGSSILGGVKEVGGKVASSAKKTAGKAWGYVKSGVNYLFGSGKEKPKKHATGGYITKPTISWIGEAGKEFVIPVENNKGRGKMLLSQAASKLGMSVVDDIASASSAGGEPATSPLVRSAAVTASVSPIIDTSSLDEQATSFGQQFTKSFDQGIRDNVVSMEAWKQKNVGQPMNNLISYSPNYGKQVVNGYAKGQNSTSTGTDGFLQTKVKMPFQNTVNKSSSWGSGTIKGFASGQNSSQTGTDQYVSTHINKPFIRSKESSNGWGSGMIGNFVSGMTSKASEVNEAAKELAKKVEKAFREELDIHSPSRVMMSLGRFASIGIVKGLDSVDVKKFAEKQAGSLAAAYSGMGAVSGNVKQWLMAAIMATKTPMSWLPGLMTIAQHESGGNPKAINLWDSNAKAGHPSQGLMQTIPSTFNAHKLPGMNNILNPIHNAAAAIGYIKSRYGSINNVPGIRSMRHGGPYVGYANGGLITKEQIARVGEGNKREWIIPEERGIRGRYLLAQAAKALGMEVTDPSEKGQTELSSGQVTAATTGRNQTTFKAAGGKEVIIQFNGDQHFHNDQDMNSLVAKIKQALVDELEQDINIGTKGVVAFD.

The stretch at 12-59 (DKISRKLRMIQGNAERLKRAANGPLIFEAEDRTERVMRQIDRSANRLT) forms a coiled coil. Disordered stretches follow at residues 586–627 (PKRT…SLPR) and 645–692 (IRRR…NPTR). The segment covering 618–627 (TATGPTSLPR) has biased composition (polar residues). A compositionally biased stretch (basic residues) spans 645–655 (IRRRRGKRVLG). The segment covering 661–672 (NRMNPSDSSIAV) has biased composition (polar residues). Phosphoserine is present on residues serine 970 and serine 972.

This sequence to B.subtilis XkdO.

This is an uncharacterized protein from Bacillus subtilis (strain 168).